The primary structure comprises 226 residues: ATP-dependent dethiobiotin synthetase BioD (226 aa).

12 to 17 (GVGKTV) serves as a coordination point for ATP. Threonine 16 serves as a coordination point for Mg(2+). The active site involves lysine 37. Threonine 41 is a substrate binding site. ATP contacts are provided by residues aspartate 49, 108–111 (EGAG), 169–170 (GS), and 197–199 (PAG). Mg(2+) contacts are provided by aspartate 49 and glutamate 108.

Belongs to the dethiobiotin synthetase family. In terms of assembly, homodimer. Mg(2+) serves as cofactor.

It localises to the cytoplasm. The enzyme catalyses (7R,8S)-7,8-diammoniononanoate + CO2 + ATP = (4R,5S)-dethiobiotin + ADP + phosphate + 3 H(+). Its pathway is cofactor biosynthesis; biotin biosynthesis; biotin from 7,8-diaminononanoate: step 1/2. Catalyzes a mechanistically unusual reaction, the ATP-dependent insertion of CO2 between the N7 and N8 nitrogen atoms of 7,8-diaminopelargonic acid (DAPA, also called 7,8-diammoniononanoate) to form a ureido ring. In Mycobacterium tuberculosis (strain ATCC 25177 / H37Ra), this protein is ATP-dependent dethiobiotin synthetase BioD.